Reading from the N-terminus, the 177-residue chain is 2''-aminoglycoside nucleotidyltransferase (177 aa).

Residues D44, D46, and D86 each coordinate Mg(2+). D86 acts as the Proton acceptor in catalysis.

It depends on Mg(2+) as a cofactor.

It carries out the reaction nucleoside triphosphate + gentamicin = diphosphate + 2''-nucleotidylgentamicin.. Mediates bacterial resistance to kanamycin, gentamicin, dibekacin, sisomicin, neomycin and tobramycin by adenylating the 2''-hydroxyl group of these antibiotics. The sequence is that of 2''-aminoglycoside nucleotidyltransferase (aadB) from Klebsiella pneumoniae.